Here is a 167-residue protein sequence, read N- to C-terminus: MLNKELLDALNEQMNHEFYAAHAYMAMAAFCDDNSYEGFANFYIQQAKEERFHGKKIYDYINDRGEHALFTAIPAPKTEFSSILETFEDGLAQEQDVTHRFYNLSDLANKDKDYATISFLNWFLDEQVEEEAMFETHIDYLNRIGDDSNTLYLYEKELAARSFDESE.

A Ferritin-like diiron domain is found at 2–145; it reads LNKELLDALN…THIDYLNRIG (144 aa). Residues glutamate 17, glutamate 50, histidine 53, glutamate 94, and glutamine 127 each coordinate Fe cation.

It belongs to the ferritin family. Prokaryotic subfamily.

It is found in the cytoplasm. It carries out the reaction 4 Fe(2+) + O2 + 6 H2O = 4 iron(III) oxide-hydroxide + 12 H(+). Its function is as follows. Iron-storage protein. The chain is Bacterial non-heme ferritin (ftnA) from Staphylococcus saprophyticus subsp. saprophyticus (strain ATCC 15305 / DSM 20229 / NCIMB 8711 / NCTC 7292 / S-41).